The chain runs to 426 residues: Serine--tRNA ligase (426 aa).

230 to 232 (TSE) is an L-serine binding site. An ATP-binding site is contributed by 261–263 (RKE). Residue glutamate 284 coordinates L-serine. 348-351 (EISS) contacts ATP. Serine 385 is an L-serine binding site.

The protein belongs to the class-II aminoacyl-tRNA synthetase family. Type-1 seryl-tRNA synthetase subfamily. In terms of assembly, homodimer. The tRNA molecule binds across the dimer.

The protein localises to the cytoplasm. The catalysed reaction is tRNA(Ser) + L-serine + ATP = L-seryl-tRNA(Ser) + AMP + diphosphate + H(+). It carries out the reaction tRNA(Sec) + L-serine + ATP = L-seryl-tRNA(Sec) + AMP + diphosphate + H(+). Its pathway is aminoacyl-tRNA biosynthesis; selenocysteinyl-tRNA(Sec) biosynthesis; L-seryl-tRNA(Sec) from L-serine and tRNA(Sec): step 1/1. In terms of biological role, catalyzes the attachment of serine to tRNA(Ser). Is also able to aminoacylate tRNA(Sec) with serine, to form the misacylated tRNA L-seryl-tRNA(Sec), which will be further converted into selenocysteinyl-tRNA(Sec). This chain is Serine--tRNA ligase, found in Wolbachia pipientis subsp. Culex pipiens (strain wPip).